A 135-amino-acid polypeptide reads, in one-letter code: Small ribosomal subunit protein bS6 (135 aa).

The tract at residues 98-135 (EASPMAKAKDERDARRAAISERSSEADEVEENAEESAE) is disordered. A compositionally biased stretch (basic and acidic residues) spans 104 to 122 (KAKDERDARRAAISERSSE). Residues 123-135 (ADEVEENAEESAE) are compositionally biased toward acidic residues.

The protein belongs to the bacterial ribosomal protein bS6 family.

Functionally, binds together with bS18 to 16S ribosomal RNA. The protein is Small ribosomal subunit protein bS6 of Shewanella amazonensis (strain ATCC BAA-1098 / SB2B).